The sequence spans 169 residues: MRDAVTTLIKNYDLTGRYLDRNAMDELKAYFESGSARIAAAAMINANSATIVKRAAAQLFEEIPELIRPSGNAYTTRRFSACLRDMDYYLRYASYALIAADNNVLDERVLQGLRETYNSLGVPIGPTVRGIQIMKEMIEAMAEDSSLNSTDFIASPFDHMTRELSELSV.

N4-methylasparagine is present on Asn72. A (2R,3E)-phycocyanobilin-binding site is contributed by Cys82.

Belongs to the phycobiliprotein family. In terms of assembly, heterodimer of ApcE and this beta chain. Contains one covalently linked bilin chromophore.

It localises to the cellular thylakoid membrane. A variant beta-allophycocyanin (AP) which forms a complex with ApcE, a phycobilisome terminal emitter that influences energy transfer to photosystem II. In Synechocystis sp. (strain ATCC 27184 / PCC 6803 / Kazusa), this protein is Allophycocyanin subunit beta-18 (apcF).